We begin with the raw amino-acid sequence, 484 residues long: UDP-glucose:undecaprenyl-phosphate glucose-1-phosphate transferase (484 aa).

5 helical membrane-spanning segments follow: residues 37 to 57 (MVVA…VPAA), 59 to 79 (YRVA…LFPL), 93 to 113 (VVLG…ALIV), 122 to 142 (GWVG…RTLL), and 299 to 319 (ILAV…AVGV).

The protein belongs to the bacterial sugar transferase family.

Its subcellular location is the cell inner membrane. The catalysed reaction is di-trans,octa-cis-undecaprenyl phosphate + UDP-alpha-D-glucose = alpha-D-glucosyl di-trans,octa-cis-undecaprenyl diphosphate + UMP. It functions in the pathway glycan biosynthesis; xanthan biosynthesis. Its function is as follows. Is the initiating enzyme for the synthesis of the exopolysaccharide xanthan. Catalyzes the transfer of the glucose-1-phosphate moiety from UDP-Glc onto the carrier lipid undecaprenyl phosphate (C55-P), forming a phosphoanhydride bond yielding to glucosyl-pyrophosphoryl-undecaprenol (Glc-PP-C55). This is UDP-glucose:undecaprenyl-phosphate glucose-1-phosphate transferase (gumD) from Xanthomonas campestris pv. campestris.